Here is a 444-residue protein sequence, read N- to C-terminus: ATP-dependent protease ATPase subunit HslU (444 aa).

ATP contacts are provided by residues I20 and 62-67 (GVGKTE). The disordered stretch occupies residues 130–158 (EDRILDALVPPPRGASGEPERGEDNSARQ). Positions 257, 322, and 394 each coordinate ATP.

This sequence belongs to the ClpX chaperone family. HslU subfamily. A double ring-shaped homohexamer of HslV is capped on each side by a ring-shaped HslU homohexamer. The assembly of the HslU/HslV complex is dependent on binding of ATP.

The protein resides in the cytoplasm. Functionally, ATPase subunit of a proteasome-like degradation complex; this subunit has chaperone activity. The binding of ATP and its subsequent hydrolysis by HslU are essential for unfolding of protein substrates subsequently hydrolyzed by HslV. HslU recognizes the N-terminal part of its protein substrates and unfolds these before they are guided to HslV for hydrolysis. The protein is ATP-dependent protease ATPase subunit HslU of Bordetella parapertussis (strain 12822 / ATCC BAA-587 / NCTC 13253).